The chain runs to 212 residues: Thiamine-phosphate synthase (212 aa).

4-amino-2-methyl-5-(diphosphooxymethyl)pyrimidine-binding positions include 41–45 (QYREK) and Asp76. Mg(2+) contacts are provided by Asp77 and Asp96. Ser114 serves as a coordination point for 4-amino-2-methyl-5-(diphosphooxymethyl)pyrimidine. Residue 141–143 (TTS) participates in 2-[(2R,5Z)-2-carboxy-4-methylthiazol-5(2H)-ylidene]ethyl phosphate binding. Position 144 (Lys144) interacts with 4-amino-2-methyl-5-(diphosphooxymethyl)pyrimidine. 2-[(2R,5Z)-2-carboxy-4-methylthiazol-5(2H)-ylidene]ethyl phosphate is bound by residues Gly172 and 192 to 193 (IS).

Belongs to the thiamine-phosphate synthase family. Requires Mg(2+) as cofactor.

The catalysed reaction is 2-[(2R,5Z)-2-carboxy-4-methylthiazol-5(2H)-ylidene]ethyl phosphate + 4-amino-2-methyl-5-(diphosphooxymethyl)pyrimidine + 2 H(+) = thiamine phosphate + CO2 + diphosphate. The enzyme catalyses 2-(2-carboxy-4-methylthiazol-5-yl)ethyl phosphate + 4-amino-2-methyl-5-(diphosphooxymethyl)pyrimidine + 2 H(+) = thiamine phosphate + CO2 + diphosphate. It carries out the reaction 4-methyl-5-(2-phosphooxyethyl)-thiazole + 4-amino-2-methyl-5-(diphosphooxymethyl)pyrimidine + H(+) = thiamine phosphate + diphosphate. The protein operates within cofactor biosynthesis; thiamine diphosphate biosynthesis; thiamine phosphate from 4-amino-2-methyl-5-diphosphomethylpyrimidine and 4-methyl-5-(2-phosphoethyl)-thiazole: step 1/1. Functionally, condenses 4-methyl-5-(beta-hydroxyethyl)thiazole monophosphate (THZ-P) and 2-methyl-4-amino-5-hydroxymethyl pyrimidine pyrophosphate (HMP-PP) to form thiamine monophosphate (TMP). The chain is Thiamine-phosphate synthase from Leuconostoc citreum (strain KM20).